The chain runs to 245 residues: Phycoerythrobilin:ferredoxin oxidoreductase (245 aa).

It belongs to the HY2 family.

It carries out the reaction (3Z)-phycoerythrobilin + oxidized 2[4Fe-4S]-[ferredoxin] = 15,16-dihydrobiliverdin + reduced 2[4Fe-4S]-[ferredoxin] + 2 H(+). Its function is as follows. Catalyzes the two-electron reduction of the C2 and C3(1) diene system of 15,16-dihydrobiliverdin. This Gloeobacter violaceus (strain ATCC 29082 / PCC 7421) protein is Phycoerythrobilin:ferredoxin oxidoreductase (pebB).